We begin with the raw amino-acid sequence, 329 residues long: G-protein coupled bile acid receptor 1 (329 aa).

Residues 1-19 (MTSNSTREVPSPVPAGALG) lie on the Extracellular side of the membrane. Asparagine 4 is a glycosylation site (N-linked (GlcNAc...) asparagine). The helical transmembrane segment at 20–40 (LSLALASLIVAANLLLAVGIA) threads the bilayer. Residues 41–52 (GDRRLRSPPAGC) are Cytoplasmic-facing. Residues 53 to 73 (FFLSLLLAGLLTGLALPALPV) traverse the membrane as a helical segment. At 74-85 (LWSQSRRGYWSC) the chain is on the extracellular side. A disulfide bond links cysteine 85 and cysteine 155. Residues 86–106 (LFLYLAPNFCFLSLLANLLLV) form a helical membrane-spanning segment. Over 107 to 125 (HGERYMAVLRPLRPRGSMR) the chain is Cytoplasmic. Residues 126-146 (LALLLTWAAPLLFASLPALGW) traverse the membrane as a helical segment. The Extracellular portion of the chain corresponds to 147–165 (NHWAPGGNCSSQAVFPAPY). N-linked (GlcNAc...) asparagine glycosylation occurs at asparagine 154. A helical membrane pass occupies residues 166–186 (LYLEIYGLLLPAVGAAALLSV). Topologically, residues 187-230 (RVLVTAHRQLQDIRRLERAVCRGAPSALARALTWRQARAQAGAT) are cytoplasmic. A helical transmembrane segment spans residues 231 to 251 (LLFGLCWGPYVATLLLSVLAF). At 252–261 (EQRPPLGPGT) the chain is on the extracellular side. Residues 262 to 282 (LLSLISLGSASAAAVPVAMGL) traverse the membrane as a helical segment. Residues 283–329 (GDQRYTGPWRVAAQKWLRMLRGRPQSSPGPSTAYHTSSQSSVDLDLN) lie on the Cytoplasmic side of the membrane. The disordered stretch occupies residues 304–329 (GRPQSSPGPSTAYHTSSQSSVDLDLN). Residues 306–329 (PQSSPGPSTAYHTSSQSSVDLDLN) show a composition bias toward polar residues.

The protein belongs to the G-protein coupled receptor 1 family.

It is found in the cell membrane. Receptor for bile acid. Bile acid-binding induces its internalization, activation of extracellular signal-regulated kinase and intracellular cAMP production. May be involved in the suppression of macrophage functions by bile acids. Involved in bile acid promoted GLP1R secretion. The chain is G-protein coupled bile acid receptor 1 (GPBAR1) from Bos taurus (Bovine).